Consider the following 161-residue polypeptide: Phosphopantetheine adenylyltransferase (161 aa).

Ser-9 contributes to the substrate binding site. Residues Ser-9–Phe-10 and His-17 each bind ATP. Positions 41, 73, and 87 each coordinate substrate. ATP-binding positions include Gly-88 to Arg-90, Glu-98, and Tyr-123 to Ser-129.

This sequence belongs to the bacterial CoaD family. As to quaternary structure, homohexamer. Mg(2+) serves as cofactor.

Its subcellular location is the cytoplasm. The catalysed reaction is (R)-4'-phosphopantetheine + ATP + H(+) = 3'-dephospho-CoA + diphosphate. The protein operates within cofactor biosynthesis; coenzyme A biosynthesis; CoA from (R)-pantothenate: step 4/5. In terms of biological role, reversibly transfers an adenylyl group from ATP to 4'-phosphopantetheine, yielding dephospho-CoA (dPCoA) and pyrophosphate. The polypeptide is Phosphopantetheine adenylyltransferase (Clostridium novyi (strain NT)).